We begin with the raw amino-acid sequence, 410 residues long: MATIAQRLRDDHGVAASESSVRRWIATHFAEEVARERVTVPRGPVDAGSEAQIDYGRLGMWFDPATARRVAVWAFVMVLAFSRHLFVRPVIRMDQTAWCACHVAAFEFFDGVPARLVCDNLRTGVDKPDLYDPQINRSYAELASHYATLVDPARARKPKDKPRVERPMTYVRDSFWKGREFDSLAQMQQAAVTWSTEVAGLRYLRALEGAQPLRMFEAVEQQALIALPPRAFELTSWSIGTVGVDTHLKVGKALYSVPWRLIGQRLHARTAGDVVQIFAGNDVVATHVRRPSGRSTDFSHYPPEKIAFHMRTPTWCRHTAELVGPASQQVIAEFMRDNAIHHLRSAQGVLGLRDKHGCDRLEAACARAIEVGDPSYRTIKGILVAGTEHAANEPTTSSPASTAGGVPARP.

Positions 40–220 (VPRGPVDAGS…QPLRMFEAVE (181 aa)) constitute an Integrase catalytic domain. The segment at 390–410 (AANEPTTSSPASTAGGVPARP) is disordered.

It belongs to the transposase IS21/IS408/IS1162 family.

The chain is Putative transposase Rv3428c from Mycobacterium tuberculosis (strain ATCC 25618 / H37Rv).